Reading from the N-terminus, the 184-residue chain is Lipocalin-15 (184 aa).

The signal sequence occupies residues 1–20 (MMSFLLGAILTLLWAPTAQA). C83 and C176 are disulfide-bonded.

Belongs to the calycin superfamily. Lipocalin family.

Its subcellular location is the secreted. The sequence is that of Lipocalin-15 (LCN15) from Homo sapiens (Human).